The primary structure comprises 179 residues: Large ribosomal subunit protein uL5 (179 aa).

This sequence belongs to the universal ribosomal protein uL5 family. Part of the 50S ribosomal subunit; part of the 5S rRNA/L5/L18/L25 subcomplex. Contacts the 5S rRNA and the P site tRNA. Forms a bridge to the 30S subunit in the 70S ribosome.

Functionally, this is one of the proteins that bind and probably mediate the attachment of the 5S RNA into the large ribosomal subunit, where it forms part of the central protuberance. In the 70S ribosome it contacts protein S13 of the 30S subunit (bridge B1b), connecting the 2 subunits; this bridge is implicated in subunit movement. Contacts the P site tRNA; the 5S rRNA and some of its associated proteins might help stabilize positioning of ribosome-bound tRNAs. The sequence is that of Large ribosomal subunit protein uL5 from Geobacillus thermodenitrificans (strain NG80-2).